Reading from the N-terminus, the 452-residue chain is Tryptophan biosynthesis protein TrpCF (452 aa).

The tract at residues 1–256 (MQTVLAKIVA…AAVRRVLLGE (256 aa)) is indole-3-glycerol phosphate synthase. Positions 257-452 (NKVCGLTRAQ…ASVFQTLRAY (196 aa)) are N-(5'-phosphoribosyl)anthranilate isomerase.

It in the N-terminal section; belongs to the TrpC family. In the C-terminal section; belongs to the TrpF family. As to quaternary structure, monomer.

It carries out the reaction N-(5-phospho-beta-D-ribosyl)anthranilate = 1-(2-carboxyphenylamino)-1-deoxy-D-ribulose 5-phosphate. The enzyme catalyses 1-(2-carboxyphenylamino)-1-deoxy-D-ribulose 5-phosphate + H(+) = (1S,2R)-1-C-(indol-3-yl)glycerol 3-phosphate + CO2 + H2O. It functions in the pathway amino-acid biosynthesis; L-tryptophan biosynthesis; L-tryptophan from chorismate: step 3/5. The protein operates within amino-acid biosynthesis; L-tryptophan biosynthesis; L-tryptophan from chorismate: step 4/5. Functionally, bifunctional enzyme that catalyzes two sequential steps of tryptophan biosynthetic pathway. The first reaction is catalyzed by the isomerase, coded by the TrpF domain; the second reaction is catalyzed by the synthase, coded by the TrpC domain. This is Tryptophan biosynthesis protein TrpCF (trpC) from Salmonella typhimurium (strain LT2 / SGSC1412 / ATCC 700720).